The primary structure comprises 149 residues: Calmodulin (149 aa).

At Ala-2 the chain carries N-acetylalanine. 4 EF-hand domains span residues 8-43, 44-79, 81-116, and 117-149; these read EQIA…LGQN, PTEA…KMKD, DTEE…LGEK, and LTDE…MMAK. Residues Asp-21, Asp-23, Asp-25, Thr-27, Glu-32, Asp-57, Asp-59, Asn-61, Thr-63, Glu-68, Asp-94, Asp-96, Asn-98, and Glu-105 each contribute to the Ca(2+) site. Lys-116 carries the post-translational modification N6,N6,N6-trimethyllysine. Ca(2+)-binding residues include Asp-130, Asp-132, Asp-134, Gln-136, and Glu-141.

The protein belongs to the calmodulin family.

Its function is as follows. Calmodulin mediates the control of a large number of enzymes, ion channels and other proteins by Ca(2+). Among the enzymes to be stimulated by the calmodulin-Ca(2+) complex are a number of protein kinases and phosphatases. The protein is Calmodulin of Heterocapsa triquetra (Dinoflagellate).